A 187-amino-acid polypeptide reads, in one-letter code: PBAN-type neuropeptides (187 aa).

Residues 1–22 form the signal peptide; the sequence is MSRFYFFFNLICLYLAIKSALS. Positions 23 to 64 are excised as a propeptide; that stretch reads AELDTNDQKYADLRTTGRGESPDSTGPDSDTLRRDDGAEGLN. Positions 34–43 are enriched in basic and acidic residues; that stretch reads DLRTTGRGES. The interval 34–58 is disordered; sequence DLRTTGRGESPDSTGPDSDTLRRDD. The residue at position 76 (Leu76) is a Leucine amide. Residues 80–127 constitute a propeptide that is removed on maturation; it reads TIAADLHDDLVEEFDAEPLGYAGEPPQKLATELVQGAPYMVLLVTAKP. The disordered stretch occupies residues 132 to 163; that stretch reads PIFYHTTSPRLGRRDSVGENHQRPPFAPRLGR. Leu142 is subject to Leucine amide. Positions 143-153 are enriched in basic and acidic residues; sequence GRRDSVGENHQ. A leucine amide mark is found at Leu161 and Leu171. The propeptide occupies 174-187; it reads SYNGGYPLPFQFAY.

It belongs to the pyrokinin family.

The protein localises to the secreted. Functionally, a hormone that controls sex pheromone production in females and pheromone responsiveness in male. Also mediates visceral muscle contractile activity (myotropic activity). This is PBAN-type neuropeptides from Anopheles gambiae (African malaria mosquito).